The chain runs to 130 residues: Small ribosomal subunit protein uS17m (130 aa).

Belongs to the universal ribosomal protein uS17 family. Component of the mitochondrial ribosome small subunit (28S) which comprises a 12S rRNA and about 30 distinct proteins.

The protein resides in the mitochondrion. The chain is Small ribosomal subunit protein uS17m (MRPS17) from Bos taurus (Bovine).